Reading from the N-terminus, the 33-residue chain is Beta-theraphotoxin-Cm1a (33 aa).

Cystine bridges form between Cys2–Cys17, Cys9–Cys22, and Cys16–Cys29. At Leu33 the chain carries Leucine amide.

It belongs to the neurotoxin 10 (Hwtx-1) family. 04 (CcoTx1) subfamily. As to expression, expressed by the venom gland.

The protein resides in the secreted. In terms of biological role, inhibits many voltage-gated sodium channels and one voltage-gated calcium channel (Cav2.2/CACNA1B (IC(50)=400 nM), Nav1.2/SCN2A (IC(50)=3-70 nM), Nav1.1/SCN1A (IC(50)=523-1060 nM), Nav1.7/SCN9A (IC(50)=129.1-5120 nM), Nav1.4/SCN4A (IC(50)=263-888 nM or &gt;10 uM) and Nav1.5/SCN5A (IC(50)=188-323 nM or &gt;10 uM)). It acts by shifting the voltage dependence of channel activation to more depolarized potentials and by blocking the inward component of the sodium current. It shows moderate affinity for lipid bilayers. On Nav1.7/SCN9A, it has been shown to interact with the S3-S4 loop of domain DII (site 4). Is significantly more potent against Nav1.2/SCN2A than the other Nav channel subtypes. In vivo, this toxin causes general ataxia, lack of response to stimuli, and semiparalysis. After a few minutes, the mice are unable to stand, and breathing is reduced in rhythm and intensity. Symptoms gradually increase with progressive slowing of breathing and flaccid paralysis, death occurred within 10 to 20 minutes post injection. Animals remain totally flaccid, and no symptoms of excitatory neurotoxicity are observed. The chain is Beta-theraphotoxin-Cm1a from Ceratogyrus marshalli (Straighthorned baboon tarantula).